Reading from the N-terminus, the 119-residue chain is Large ribosomal subunit protein uL22 (119 aa).

The protein belongs to the universal ribosomal protein uL22 family. In terms of assembly, part of the 50S ribosomal subunit.

In terms of biological role, this protein binds specifically to 23S rRNA; its binding is stimulated by other ribosomal proteins, e.g. L4, L17, and L20. It is important during the early stages of 50S assembly. It makes multiple contacts with different domains of the 23S rRNA in the assembled 50S subunit and ribosome. The globular domain of the protein is located near the polypeptide exit tunnel on the outside of the subunit, while an extended beta-hairpin is found that lines the wall of the exit tunnel in the center of the 70S ribosome. The polypeptide is Large ribosomal subunit protein uL22 (Trichodesmium erythraeum (strain IMS101)).